We begin with the raw amino-acid sequence, 188 residues long: PRA1 family protein 3 (188 aa).

Position 1 is an N-acetylmethionine (M1). Over 1–35 (MDVNIAPLRAWDDFFPGSDRFARPDFRDISKWNNR) the chain is Cytoplasmic. The next 2 membrane-spanning stretches (helical) occupy residues 36–56 (VVSN…MMIS) and 57–77 (VVGF…VLVF). Residues 78–93 (TGFVWAAHNKDILRRL) lie on the Cytoplasmic side of the membrane. Helical transmembrane passes span 94 to 114 (KKQY…FLIS) and 115 to 135 (MFGG…LMFI). The tract at residues 103–117 (MVVMLASYFLISMFG) is required for homodimer formation and heterodimer formation with ARL6IP1. The Cytoplasmic portion of the chain corresponds to 136–188 (HASLRLRNLKNKLENKIEGIGLKRTPMGIVLDALEQQEENISKFADYISKVNE). The tract at residues 136–188 (HASLRLRNLKNKLENKIEGIGLKRTPMGIVLDALEQQEENISKFADYISKVNE) is targeting to endoplasmic reticulum membrane.

This sequence belongs to the PRA1 family. In terms of assembly, homodimer. Heterodimer with ARL6IP1. Forms multimers. Interacts with ARL6. Interacts with prenylated RAB1A and RAB3A. Interacts with SLC1A1/EAAC1. Interacts with RTN2 (via first transmembrane domain). Does not interact with VAMP1, VAMP2 or VAMP3.

It is found in the endoplasmic reticulum membrane. It localises to the cell membrane. The protein resides in the cytoplasm. The protein localises to the cytoskeleton. Its function is as follows. Regulates intracellular concentrations of taurine and glutamate. Negatively modulates SLC1A1/EAAC1 glutamate transport activity by decreasing its affinity for glutamate in a PKC activity-dependent manner. Plays a role in the retention of SLC1A1/EAAC1 in the endoplasmic reticulum. The polypeptide is PRA1 family protein 3 (ARL6IP5) (Sus scrofa (Pig)).